Here is a 103-residue protein sequence, read N- to C-terminus: uncharacterized protein (103 aa).

A helical membrane pass occupies residues 33 to 57 (GYVAAIVAGPVSMSPLDWICPLLAI).

The protein resides in the membrane. This is an uncharacterized protein from Sinorhizobium fredii (strain NBRC 101917 / NGR234).